Reading from the N-terminus, the 143-residue chain is Small ribosomal subunit protein uS11c (143 aa).

The protein belongs to the universal ribosomal protein uS11 family. In terms of assembly, part of the 30S ribosomal subunit.

It localises to the plastid. Its subcellular location is the chloroplast. In Saccharum officinarum (Sugarcane), this protein is Small ribosomal subunit protein uS11c.